A 353-amino-acid polypeptide reads, in one-letter code: Guanine nucleotide-binding protein G(q) subunit alpha (353 aa).

2 S-palmitoyl cysteine lipidation sites follow: Cys3 and Cys4. In terms of domain architecture, G-alpha spans 32-353 (RELKLLLLGT…QLNLKEYNLV (322 aa)). The G1 motif stretch occupies residues 35–48 (KLLLLGTGESGKST). Residues 40–47 (GTGESGKS), 174–180 (LRVRAPT), 199–203 (DVGGQ), 268–271 (NKKD), and Ala325 each bind GTP. Residues Ser47 and Thr180 each contribute to the Mg(2+) site. Positions 172–180 (DILRVRAPT) are G2 motif. Residues 195–204 (FRMVDVGGQR) form a G3 motif region. Residues 264–271 (ILFLNKKD) are G4 motif. A G5 motif region spans residues 323-328 (TCATDT).

It belongs to the G-alpha family. G(q) subfamily. In terms of assembly, g proteins are composed of 3 units; alpha, beta and gamma. The alpha chain contains the guanine nucleotide binding site.

Its function is as follows. Guanine nucleotide-binding proteins (G proteins) are involved as modulators or transducers in various transmembrane signaling systems. The chain is Guanine nucleotide-binding protein G(q) subunit alpha from Homarus americanus (American lobster).